We begin with the raw amino-acid sequence, 563 residues long: Arginine--tRNA ligase (563 aa).

Residues 121–131 (PNIAKPFSIGH) carry the 'HIGH' region motif.

The protein belongs to the class-I aminoacyl-tRNA synthetase family. As to quaternary structure, monomer.

It localises to the cytoplasm. It catalyses the reaction tRNA(Arg) + L-arginine + ATP = L-arginyl-tRNA(Arg) + AMP + diphosphate. The polypeptide is Arginine--tRNA ligase (Streptococcus thermophilus (strain CNRZ 1066)).